Here is a 188-residue protein sequence, read N- to C-terminus: UPF0301 protein XOO1309 (188 aa).

The protein belongs to the UPF0301 (AlgH) family.

The polypeptide is UPF0301 protein XOO1309 (Xanthomonas oryzae pv. oryzae (strain MAFF 311018)).